The sequence spans 340 residues: Phosphoribosylformylglycinamidine cyclo-ligase (340 aa).

It belongs to the AIR synthase family.

The protein localises to the cytoplasm. The enzyme catalyses 2-formamido-N(1)-(5-O-phospho-beta-D-ribosyl)acetamidine + ATP = 5-amino-1-(5-phospho-beta-D-ribosyl)imidazole + ADP + phosphate + H(+). The protein operates within purine metabolism; IMP biosynthesis via de novo pathway; 5-amino-1-(5-phospho-D-ribosyl)imidazole from N(2)-formyl-N(1)-(5-phospho-D-ribosyl)glycinamide: step 2/2. This Streptococcus agalactiae serotype V (strain ATCC BAA-611 / 2603 V/R) protein is Phosphoribosylformylglycinamidine cyclo-ligase.